Consider the following 130-residue polypeptide: Small ribosomal subunit protein bS18 (130 aa).

Composition is skewed to basic and acidic residues over residues 98 to 108 (KKMEESVKSAE) and 117 to 130 (EESK…AKTE). A disordered region spans residues 98–130 (KKMEESVKSAEPKATAEATEESKPKRTRKAKTE).

The protein belongs to the bacterial ribosomal protein bS18 family. As to quaternary structure, part of the 30S ribosomal subunit. Forms a tight heterodimer with protein bS6.

Its function is as follows. Binds as a heterodimer with protein bS6 to the central domain of the 16S rRNA, where it helps stabilize the platform of the 30S subunit. The polypeptide is Small ribosomal subunit protein bS18 (Metamycoplasma arthritidis (strain 158L3-1) (Mycoplasma arthritidis)).